A 116-amino-acid polypeptide reads, in one-letter code: UPF0102 protein PERMA_0362 (116 aa).

It belongs to the UPF0102 family.

The chain is UPF0102 protein PERMA_0362 from Persephonella marina (strain DSM 14350 / EX-H1).